The sequence spans 158 residues: MARMHARKRGKSGSKRPPRTAPPIWVEYTVEEIENLVVKLRKEGYSTAMIGTILRDQYGIPSVKLFKDPDNPNRNLTITRILEKHGLAPEIPEDLMFLIRRAVNLRKHLEQHPKDLHSMRGLQLIESKIRRLVKYYKRKGKLPKNWRYDPETAKLLVR.

Residues 1–18 (MARMHARKRGKSGSKRPP) are compositionally biased toward basic residues. Residues 1–21 (MARMHARKRGKSGSKRPPRTA) are disordered.

The protein belongs to the universal ribosomal protein uS15 family. As to quaternary structure, part of the 30S ribosomal subunit.

The chain is Small ribosomal subunit protein uS15 from Pyrococcus furiosus (strain ATCC 43587 / DSM 3638 / JCM 8422 / Vc1).